We begin with the raw amino-acid sequence, 210 residues long: Thiamine-phosphate synthase (210 aa).

4-amino-2-methyl-5-(diphosphooxymethyl)pyrimidine-binding positions include 39–43 (QLREK) and Asn71. Positions 72 and 91 each coordinate Mg(2+). Ser110 is a 4-amino-2-methyl-5-(diphosphooxymethyl)pyrimidine binding site. 136-138 (TST) lines the 2-[(2R,5Z)-2-carboxy-4-methylthiazol-5(2H)-ylidene]ethyl phosphate pocket. Lys139 serves as a coordination point for 4-amino-2-methyl-5-(diphosphooxymethyl)pyrimidine. Residues Gly166 and 186–187 (VS) each bind 2-[(2R,5Z)-2-carboxy-4-methylthiazol-5(2H)-ylidene]ethyl phosphate.

This sequence belongs to the thiamine-phosphate synthase family. Mg(2+) is required as a cofactor.

It carries out the reaction 2-[(2R,5Z)-2-carboxy-4-methylthiazol-5(2H)-ylidene]ethyl phosphate + 4-amino-2-methyl-5-(diphosphooxymethyl)pyrimidine + 2 H(+) = thiamine phosphate + CO2 + diphosphate. The enzyme catalyses 2-(2-carboxy-4-methylthiazol-5-yl)ethyl phosphate + 4-amino-2-methyl-5-(diphosphooxymethyl)pyrimidine + 2 H(+) = thiamine phosphate + CO2 + diphosphate. It catalyses the reaction 4-methyl-5-(2-phosphooxyethyl)-thiazole + 4-amino-2-methyl-5-(diphosphooxymethyl)pyrimidine + H(+) = thiamine phosphate + diphosphate. It participates in cofactor biosynthesis; thiamine diphosphate biosynthesis; thiamine phosphate from 4-amino-2-methyl-5-diphosphomethylpyrimidine and 4-methyl-5-(2-phosphoethyl)-thiazole: step 1/1. Condenses 4-methyl-5-(beta-hydroxyethyl)thiazole monophosphate (THZ-P) and 2-methyl-4-amino-5-hydroxymethyl pyrimidine pyrophosphate (HMP-PP) to form thiamine monophosphate (TMP). This Ruminiclostridium cellulolyticum (strain ATCC 35319 / DSM 5812 / JCM 6584 / H10) (Clostridium cellulolyticum) protein is Thiamine-phosphate synthase.